Reading from the N-terminus, the 625-residue chain is MFDIQEELKKLPDKPGVYIMKDENGEIIYVGKAVVLKNRVRQYFQSLSNQTPKVRAMVAHIKEFEYIVTDTELEALILECNLIKKHRPKFNILLKDDKNYPYIKVTMNEDFPRILMTRRVEKDGAKYFGPYTSAYAVRETIDLVKKLFPVKTCSKVLPRDIGKGRPCLNYHIYQCLGPCQGNVSKEEYRFMMQDVCNFLGGRQEDIIKKLEKDMKEAADNLEFERAARIRDKINSLKHIAEKQKIISTAMEDQDVIAFAKSETDSCIQVFFIRGGKLIGREHFILEGTSDVSDSELMTAFVKQFYSSAAYVPGQIILQEDIDEMEIIEKWLSGKRGTKTYIKVPRRGEKLKLVEMVSKNALIELNQFKERIKKEAALAKEGMEKLKELLNLDRLPRRIEAYDISNTGSTEIVGSMVVFENGSPKKSDYRRFKIKSINVQNDYQSMQEVIFRRLKRAQKEMTEKDEGGGKDVGEKGAGFGTLPDVLLVDGGTGHVNAVRSVLEELDFNIPVYGMVKDDNHRTRGLVTGEREFDLSKDIVLLRFVTAIQDEAHRFALEYNRKLRAKRYSGSVLDNIEGVGPKRKKELIRHFGSVKAIKEAEPGEIAKVKGISRDLAQKIYDYFRQQE.

Positions D13–I92 constitute a GIY-YIG domain. Residues E204–I239 form the UVR domain.

The protein belongs to the UvrC family. Interacts with UvrB in an incision complex.

Its subcellular location is the cytoplasm. Its function is as follows. The UvrABC repair system catalyzes the recognition and processing of DNA lesions. UvrC both incises the 5' and 3' sides of the lesion. The N-terminal half is responsible for the 3' incision and the C-terminal half is responsible for the 5' incision. The protein is UvrABC system protein C of Acetivibrio thermocellus (strain ATCC 27405 / DSM 1237 / JCM 9322 / NBRC 103400 / NCIMB 10682 / NRRL B-4536 / VPI 7372) (Clostridium thermocellum).